A 196-amino-acid chain; its full sequence is MDSDFHVKPEIRILGIDDSALLNEKVMIVGTVFRGGDWIDGVLRSEITRDGLDATEVMVTMIKNSRHHNQLRVIMLDGITYGGFNVVDIEELYRETGLPVIVIMRSCPDFEKIRSALKHFSDGEERWKIIKKAGKIEKLITGRNGTPIYIQKAGIGAKNVEKIIRLTSIRSSIPEPLRVAHLIATGITLGESRGKA.

Belongs to the UPF0215 family.

This is UPF0215 protein MM_1007 from Methanosarcina mazei (strain ATCC BAA-159 / DSM 3647 / Goe1 / Go1 / JCM 11833 / OCM 88) (Methanosarcina frisia).